The following is a 415-amino-acid chain: Amino acid decarboxylase lolD2 (415 aa).

An N6-(pyridoxal phosphate)lysine modification is found at Lys62. Residues Ser194, Gly231, and 266 to 269 (EPGT) contribute to the pyridoxal 5'-phosphate site. 315-316 (IV) provides a ligand contact to substrate. Catalysis depends on Cys351, which acts as the Proton donor; shared with dimeric partner. S-nitrosocysteine is present on Cys351. Asp352 is a substrate binding site. Residue Tyr381 coordinates pyridoxal 5'-phosphate.

Belongs to the Orn/Lys/Arg decarboxylase class-II family. As to quaternary structure, homodimer. The cofactor is pyridoxal 5'-phosphate.

The protein operates within alkaloid biosynthesis. Amino acid decarboxylase; part of the gene cluster that mediates the biosynthesis of loline alkaloids, potent insecticidal agents composed of a pyrrolizidine ring system and an uncommon ether bridge linking carbons 2 and 7. Lolines are structurally differentiated by the various modifications of the L-amino group and include norloline, loline, N-methylloline, N-acetylloline, N-acetylnorloline, and N-formylloline. The first committed step is the condensation of O-acetyl-L-homoserine (derived from L-aspartic acid) and L-proline, probably catalyzed by the gamma-type pyridoxal 5'-phosphate(PLP)-dependent enzyme lolC, to give the diamino diacid, NACPP. Ensuing cyclization, decarboxylation, and acetylation steps yield 1-exo-acetamidopyrrolizidine (AcAP). LolO is required for installation of the ether bridge upon the pathway intermediate, 1-exo-acetamidopyrrolizidine (AcAP). In sequential 2-oxoglutarate- and O(2)-consuming steps, lolO removes hydrogens from C2 and C7 of AcAP to form both carbon-oxygen bonds in N-acetylnorloline (NANL), the precursor to all other lolines. The enzymes lolD, lolE, lolF and lolT have also been proposed to be involved in the ether-bridge installation. Further processing of the exocyclic moiety of NANL by fungal N-acetamidase (LolN), methyltransferase (LolM), and cytochrome P450 (LolP) enzymes, with occasional involvement of a plant acetyltransferase, generates the other known lolines. LolN transforms NANL to norlonine which is monomethylated and dimethylated to respectively lonine and N-methyllonine (NML) by lolM. LolP catalyzes hydroxylation of the methyl group in N-methylloline (NML) and further oxygenation to N-formylloline (NFL). A plant acetyltransferase is responsible for the acetylation of loline to form N-acetylloline (NAL). LolA might interact with aspartate kinase to prevent feedback inhibition of its activity by these end products and thereby promote production of L-homoserine from L-aspartate. The sequence is that of Amino acid decarboxylase lolD2 from Epichloe uncinata (Endophyte fungus).